The sequence spans 241 residues: Beta-nerve growth factor (241 aa).

An N-terminal signal peptide occupies residues methionine 1–alanine 18. Positions glutamate 19–arginine 121 are excised as a propeptide. 2 N-linked (GlcNAc...) asparagine glycosylation sites follow: asparagine 69 and asparagine 114. Disulfide bonds link cysteine 136–cysteine 201, cysteine 179–cysteine 229, and cysteine 189–cysteine 231. A 1-acyl-sn-glycero-3-phospho-(1D-myo-inositol)-binding residues include tyrosine 173 and lysine 209. Lysine 209 lines the a 1-acyl-sn-glycero-3-phospho-L-serine pocket.

The protein belongs to the NGF-beta family. Homodimer. The homodimer interacts with a single NTRK1 chain. The homodimer interacts with a single NGFR chain. The NGF dimer interacts with a single SORCS2 chain (via extracellular domain). The NGF precursor (proNGF) binds to a receptor complex formed by SORT1 and NGFR, which leads to NGF endocytosis. Both mature NGF and the immature NGF precursor (proNGF) interact with SORCS2 and with the heterodimer formed by SORCS2 and NGFR (via extracellular domains). The NGF precursor (proNGF) has much higher affinity for SORCS2 than mature NGF. The NGF precursor (proNGF) has much higher affinity for SORT1 than mature NGF. Interacts with ADAM10 in a divalent cation-dependent manner. Interaction with SORCS3.

Its subcellular location is the secreted. The protein localises to the endosome lumen. Its function is as follows. Nerve growth factor is important for the development and maintenance of the sympathetic and sensory nervous systems. Extracellular ligand for the NTRK1 and NGFR receptors, activates cellular signaling cascades to regulate neuronal proliferation, differentiation and survival. The immature NGF precursor (proNGF) functions as a ligand for the heterodimeric receptor formed by SORCS2 and NGFR, and activates cellular signaling cascades that lead to inactivation of RAC1 and/or RAC2, reorganization of the actin cytoskeleton and neuronal growth cone collapse. In contrast to mature NGF, the precursor form (proNGF) promotes neuronal apoptosis (in vitro). Inhibits metalloproteinase-dependent proteolysis of platelet glycoprotein VI. Binds lysophosphatidylinositol and lysophosphatidylserine between the two chains of the homodimer. The lipid-bound form promotes histamine relase from mast cells, contrary to the lipid-free form. In Homo sapiens (Human), this protein is Beta-nerve growth factor (NGF).